The primary structure comprises 379 residues: Flagellar P-ring protein (379 aa).

The N-terminal stretch at 1-32 (MTAPAGFLPRVGRLIAVALTAVFLLAPTGAEA) is a signal peptide.

Belongs to the FlgI family. As to quaternary structure, the basal body constitutes a major portion of the flagellar organelle and consists of four rings (L,P,S, and M) mounted on a central rod.

The protein localises to the periplasm. Its subcellular location is the bacterial flagellum basal body. Assembles around the rod to form the L-ring and probably protects the motor/basal body from shearing forces during rotation. This chain is Flagellar P-ring protein, found in Rhodospirillum rubrum (strain ATCC 11170 / ATH 1.1.1 / DSM 467 / LMG 4362 / NCIMB 8255 / S1).